The chain runs to 250 residues: Glucosamine-6-phosphate deaminase (250 aa).

Residue Asp67 is the Proton acceptor; for enolization step of the active site. Asn136 serves as the catalytic For ring-opening step. His138 (proton acceptor; for ring-opening step) is an active-site residue. The active-site For ring-opening step is Glu143.

The protein belongs to the glucosamine/galactosamine-6-phosphate isomerase family. NagB subfamily.

It catalyses the reaction alpha-D-glucosamine 6-phosphate + H2O = beta-D-fructose 6-phosphate + NH4(+). It functions in the pathway amino-sugar metabolism; N-acetylneuraminate degradation; D-fructose 6-phosphate from N-acetylneuraminate: step 5/5. Functionally, catalyzes the reversible isomerization-deamination of glucosamine 6-phosphate (GlcN6P) to form fructose 6-phosphate (Fru6P) and ammonium ion. The sequence is that of Glucosamine-6-phosphate deaminase from Oceanobacillus iheyensis (strain DSM 14371 / CIP 107618 / JCM 11309 / KCTC 3954 / HTE831).